The primary structure comprises 238 residues: Major prion protein (238 aa).

A signal peptide spans 1–15; it reads MLVLFVATWSDLGLC. Residues 16–215 are interaction with GRB2, ERI3 and SYN1; it reads KKRPKPGGWN…ESQAYYQRGS (200 aa). A disordered region spans residues 18–93; that stretch reads RPKPGGWNTG…WHKPSKPKTS (76 aa). Repeat copies occupy residues 44 to 52, 53 to 60, 61 to 68, and 69 to 76. Residues 44–83 are 4 X 8 AA tandem repeats of P-H-G-G-G-W-G-Q; the sequence is PQGGGGWGQPHGGGWGQPHGGGWGQPHGGGWGQGGGTHNQ. Residues 45-80 are compositionally biased toward gly residues; the sequence is QGGGGWGQPHGGGWGQPHGGGWGQPHGGGWGQGGGT. G47, G48, H54, G55, G56, H62, G63, G64, H70, G71, and G72 together coordinate Cu(2+). Residues 83–93 show a composition bias toward basic residues; that stretch reads QWHKPSKPKTS. A disulfide bond links C164 and C199. N-linked (GlcNAc...) asparagine glycans are attached at residues N166 and N182. S215 carries the GPI-anchor amidated serine lipid modification. Residues 216–238 constitute a propeptide, removed in mature form; that stretch reads SIVLFSSPPVILLISFLIFLIVG.

Belongs to the prion family. In terms of assembly, monomer and homodimer. Has a tendency to aggregate into amyloid fibrils containing a cross-beta spine, formed by a steric zipper of superposed beta-strands. Soluble oligomers may represent an intermediate stage on the path to fibril formation. Copper binding may promote oligomerization. Interacts with GRB2, APP, ERI3/PRNPIP and SYN1. Mislocalized cytosolically exposed PrP interacts with MGRN1; this interaction alters MGRN1 subcellular location and causes lysosomal enlargement. Interacts with KIAA1191.

It is found in the cell membrane. Its subcellular location is the golgi apparatus. Its primary physiological function is unclear. Has cytoprotective activity against internal or environmental stresses. May play a role in neuronal development and synaptic plasticity. May be required for neuronal myelin sheath maintenance. May play a role in iron uptake and iron homeostasis. Soluble oligomers are toxic to cultured neuroblastoma cells and induce apoptosis (in vitro). Association with GPC1 (via its heparan sulfate chains) targets PRNP to lipid rafts. Also provides Cu(2+) or Zn(2+) for the ascorbate-mediated GPC1 deaminase degradation of its heparan sulfate side chains. The protein is Major prion protein (PRNP) of Theropithecus gelada (Gelada baboon).